The primary structure comprises 211 residues: Cytochrome c biogenesis ATP-binding export protein CcmA 2 (211 aa).

The ABC transporter domain maps to 6-208; the sequence is LEARELGVRR…GAVLDLATDA (203 aa). 38-45 is a binding site for ATP; the sequence is GPNGAGKT.

It belongs to the ABC transporter superfamily. CcmA exporter (TC 3.A.1.107) family. The complex is composed of two ATP-binding proteins (CcmA) and two transmembrane proteins (CcmB).

Its subcellular location is the cell inner membrane. It carries out the reaction heme b(in) + ATP + H2O = heme b(out) + ADP + phosphate + H(+). Functionally, part of the ABC transporter complex CcmAB involved in the biogenesis of c-type cytochromes; once thought to export heme, this seems not to be the case, but its exact role is uncertain. Responsible for energy coupling to the transport system. This chain is Cytochrome c biogenesis ATP-binding export protein CcmA 2, found in Cupriavidus metallidurans (strain ATCC 43123 / DSM 2839 / NBRC 102507 / CH34) (Ralstonia metallidurans).